Here is a 172-residue protein sequence, read N- to C-terminus: uncharacterized protein (172 aa).

Disordered regions lie at residues 1-54 and 82-111; these read MPRR…GGSS and ITGG…SVPE. A compositionally biased stretch (low complexity) spans 14 to 29; it reads AAPARSASTAAALPPR. The segment covering 30–47 has biased composition (pro residues); the sequence is TMAPPPAPSRVQQAPPPT. Polar residues predominate over residues 89-109; that stretch reads SGSNNAPADTSVPQSSYSNSV.

This is an uncharacterized protein from Schizosaccharomyces pombe (strain 972 / ATCC 24843) (Fission yeast).